The following is a 307-amino-acid chain: Glycerol-3-phosphate dehydrogenase [NAD(P)+] (307 aa).

NADPH-binding residues include Phe11, Arg31, and Lys95. Sn-glycerol 3-phosphate-binding residues include Lys95, Gly121, and Ser123. Ala125 is an NADPH binding site. 5 residues coordinate sn-glycerol 3-phosphate: Lys176, Asp229, Ser239, Arg240, and Asn241. The active-site Proton acceptor is Lys176. Arg240 contributes to the NADPH binding site. Glu261 serves as a coordination point for NADPH.

It belongs to the NAD-dependent glycerol-3-phosphate dehydrogenase family.

The protein localises to the cytoplasm. It carries out the reaction sn-glycerol 3-phosphate + NAD(+) = dihydroxyacetone phosphate + NADH + H(+). The enzyme catalyses sn-glycerol 3-phosphate + NADP(+) = dihydroxyacetone phosphate + NADPH + H(+). It functions in the pathway membrane lipid metabolism; glycerophospholipid metabolism. Functionally, catalyzes the reduction of the glycolytic intermediate dihydroxyacetone phosphate (DHAP) to sn-glycerol 3-phosphate (G3P), the key precursor for phospholipid synthesis. This Jannaschia sp. (strain CCS1) protein is Glycerol-3-phosphate dehydrogenase [NAD(P)+].